The chain runs to 381 residues: Cobalt-precorrin-5B C(1)-methyltransferase (381 aa).

Belongs to the CbiD family.

It catalyses the reaction Co-precorrin-5B + S-adenosyl-L-methionine = Co-precorrin-6A + S-adenosyl-L-homocysteine. It functions in the pathway cofactor biosynthesis; adenosylcobalamin biosynthesis; cob(II)yrinate a,c-diamide from sirohydrochlorin (anaerobic route): step 6/10. Catalyzes the methylation of C-1 in cobalt-precorrin-5B to form cobalt-precorrin-6A. The protein is Cobalt-precorrin-5B C(1)-methyltransferase of Prochlorococcus marinus (strain SARG / CCMP1375 / SS120).